The chain runs to 131 residues: Ribonuclease VapC3 (131 aa).

Residues 4–121 enclose the PINc domain; the sequence is VVDASAIAAL…GKLLTLDRQL (118 aa). 3 residues coordinate Mg(2+): D6, D100, and D118.

The protein belongs to the PINc/VapC protein family. As to quaternary structure, homodimer. Forms a complex with putative antitoxin VapB3, possibly VapB(2)-VapC(2). Requires Mg(2+) as cofactor.

Inhibited by EDTA. In terms of biological role, toxic component of a type II toxin-antitoxin (TA) system. Has ribonuclease activity. The chain is Ribonuclease VapC3 from Pyrobaculum aerophilum (strain ATCC 51768 / DSM 7523 / JCM 9630 / CIP 104966 / NBRC 100827 / IM2).